The following is a 585-amino-acid chain: Cytidine monophosphate-N-acetylneuraminic acid hydroxylase (585 aa).

One can recognise a Rieske domain in the interval 9-107 (LSPVEVANLK…VEMDENNRLL (99 aa)). [2Fe-2S] cluster contacts are provided by cysteine 49, histidine 51, cysteine 70, and histidine 73.

It belongs to the CMP-Neu5Ac hydroxylase family. [2Fe-2S] cluster is required as a cofactor.

The protein resides in the cytoplasm. The catalysed reaction is CMP-N-acetyl-beta-neuraminate + 2 Fe(II)-[cytochrome b5] + O2 + 2 H(+) = CMP-N-glycoloyl-beta-neuraminate + 2 Fe(III)-[cytochrome b5] + H2O. Its pathway is amino-sugar metabolism; N-acetylneuraminate metabolism. Its function is as follows. Sialic acids are components of carbohydrate chains of glycoconjugates and are involved in cell-cell recognition and cell-pathogen interactions. Catalyzes the conversion of CMP-N-acetylneuraminic acid (CMP-Neu5Ac) into its hydroxylated derivative CMP-N-glycolylneuraminic acid (CMP-Neu5Gc), a sialic acid abundantly expressed at the surface of many cells. The sequence is that of Cytidine monophosphate-N-acetylneuraminic acid hydroxylase (CMAH) from Pongo pygmaeus (Bornean orangutan).